The chain runs to 758 residues: Phosphoribosylformylglycinamidine synthase subunit PurL (758 aa).

His-57 is an active-site residue. Residues Tyr-60 and Arg-104 each coordinate ATP. Residue Glu-106 participates in Mg(2+) binding. Residues 107 to 110 (SHNH) and Arg-129 each bind substrate. His-108 acts as the Proton acceptor in catalysis. Asp-130 is a Mg(2+) binding site. Residue Gln-254 coordinates substrate. Residue Asp-282 coordinates Mg(2+). Substrate is bound at residue 326 to 328 (ESQ). ATP is bound by residues Asn-509 and Gly-546. Asn-547 provides a ligand contact to Mg(2+). Ser-549 provides a ligand contact to substrate.

It belongs to the FGAMS family. Monomer. Part of the FGAM synthase complex composed of 1 PurL, 1 PurQ and 2 PurS subunits.

The protein localises to the cytoplasm. It carries out the reaction N(2)-formyl-N(1)-(5-phospho-beta-D-ribosyl)glycinamide + L-glutamine + ATP + H2O = 2-formamido-N(1)-(5-O-phospho-beta-D-ribosyl)acetamidine + L-glutamate + ADP + phosphate + H(+). The protein operates within purine metabolism; IMP biosynthesis via de novo pathway; 5-amino-1-(5-phospho-D-ribosyl)imidazole from N(2)-formyl-N(1)-(5-phospho-D-ribosyl)glycinamide: step 1/2. Functionally, part of the phosphoribosylformylglycinamidine synthase complex involved in the purines biosynthetic pathway. Catalyzes the ATP-dependent conversion of formylglycinamide ribonucleotide (FGAR) and glutamine to yield formylglycinamidine ribonucleotide (FGAM) and glutamate. The FGAM synthase complex is composed of three subunits. PurQ produces an ammonia molecule by converting glutamine to glutamate. PurL transfers the ammonia molecule to FGAR to form FGAM in an ATP-dependent manner. PurS interacts with PurQ and PurL and is thought to assist in the transfer of the ammonia molecule from PurQ to PurL. The chain is Phosphoribosylformylglycinamidine synthase subunit PurL from Corynebacterium ammoniagenes (Brevibacterium ammoniagenes).